Here is a 375-residue protein sequence, read N- to C-terminus: FAD-dependent catabolic D-arginine dehydrogenase DauA (375 aa).

FAD is bound by residues Ala14, 32–33, 41–48, Ala171, and 331–336; these read ER, STGRSAAH, and GGYGIQ.

It belongs to the FAD-dependent glycerol-3-phosphate dehydrogenase family. As to quaternary structure, monomer. The cofactor is FAD.

It catalyses the reaction D-arginine + A + H2O = 5-guanidino-2-oxopentanoate + AH2 + NH4(+). The enzyme catalyses a D-alpha-amino acid + A + H2O = a 2-oxocarboxylate + AH2 + NH4(+). Inhibited by D-arginine and D-lysine at high concentration. Functionally, dauA is highly expressed within the cystic fibrosis (CF) lung, and it is required for virulence via the optimal production of hydrogen cyanide, pyocyanine, pyoverdine, rhamnolipid and alginate during biofilm formation. Involved in the catabolism of D-lysine and D-arginine. Under aerobic conditions, the arginine succinyltransferase (AST) and arginine transaminase (ATA) pathways are 2 major routes for L-arginine utilization as the sole source of carbon and nitrogen. The D-to-L racemization of arginine by DauA and DauB is necessary, before to be channeled into the AST and/or ATA pathways. DauA catalyzes the flavin-dependent oxidative deamination of D-arginine into 2-ketoarginine (2-KA) and ammonia. It also has dehydrogenase activity towards D-lysine, D-tyrosine, D-methionine, D-phenylalanine, D-ornithine, D-histidine and D-leucine as substrates. The protein is FAD-dependent catabolic D-arginine dehydrogenase DauA of Pseudomonas aeruginosa (strain ATCC 15692 / DSM 22644 / CIP 104116 / JCM 14847 / LMG 12228 / 1C / PRS 101 / PAO1).